The primary structure comprises 302 residues: Probable alpha-L-glutamate ligase (302 aa).

Residues L112–E294 form the ATP-grasp domain. ATP is bound by residues K148, D185–F186, D194, and R218–N220. The Mg(2+) site is built by D255, E267, and N269. 3 residues coordinate Mn(2+): D255, E267, and N269.

It belongs to the RimK family. Mg(2+) is required as a cofactor. It depends on Mn(2+) as a cofactor.

This is Probable alpha-L-glutamate ligase from Haemophilus influenzae (strain ATCC 51907 / DSM 11121 / KW20 / Rd).